Here is a 192-residue protein sequence, read N- to C-terminus: Recombination protein RecR (192 aa).

A C4-type zinc finger spans residues 51-66 (CQTCFHLSADPECEIC). In terms of domain architecture, Toprim spans 74–168 (GLICVVADSR…PVSRIAYGLP (95 aa)).

The protein belongs to the RecR family.

Its function is as follows. May play a role in DNA repair. It seems to be involved in an RecBC-independent recombinational process of DNA repair. It may act with RecF and RecO. This chain is Recombination protein RecR, found in Parasynechococcus marenigrum (strain WH8102).